The following is a 303-amino-acid chain: Acetyl-coenzyme A carboxylase carboxyl transferase subunit beta (303 aa).

In terms of domain architecture, CoA carboxyltransferase N-terminal spans 29–298 (LWVKCPETGQ…ATPAPASAAA (270 aa)).

This sequence belongs to the AccD/PCCB family. In terms of assembly, acetyl-CoA carboxylase is a heterohexamer composed of biotin carboxyl carrier protein (AccB), biotin carboxylase (AccC) and two subunits each of ACCase subunit alpha (AccA) and ACCase subunit beta (AccD).

The protein resides in the cytoplasm. It catalyses the reaction N(6)-carboxybiotinyl-L-lysyl-[protein] + acetyl-CoA = N(6)-biotinyl-L-lysyl-[protein] + malonyl-CoA. It participates in lipid metabolism; malonyl-CoA biosynthesis; malonyl-CoA from acetyl-CoA: step 1/1. In terms of biological role, component of the acetyl coenzyme A carboxylase (ACC) complex. Biotin carboxylase (BC) catalyzes the carboxylation of biotin on its carrier protein (BCCP) and then the CO(2) group is transferred by the transcarboxylase to acetyl-CoA to form malonyl-CoA. This chain is Acetyl-coenzyme A carboxylase carboxyl transferase subunit beta, found in Methylobacterium sp. (strain 4-46).